We begin with the raw amino-acid sequence, 229 residues long: Potassium/proton antiporter CemA (229 aa).

A run of 4 helical transmembrane segments spans residues 7 to 27, 114 to 134, 154 to 174, and 189 to 209; these read FTPL…SLSL, IICF…LLIL, ILLL…ELMI, and IISG…KYWI.

It belongs to the CemA family.

It localises to the plastid. It is found in the chloroplast inner membrane. The catalysed reaction is K(+)(in) + H(+)(out) = K(+)(out) + H(+)(in). Contributes to K(+)/H(+) antiport activity by supporting proton efflux to control proton extrusion and homeostasis in chloroplasts in a light-dependent manner to modulate photosynthesis. Prevents excessive induction of non-photochemical quenching (NPQ) under continuous-light conditions. Indirectly promotes efficient inorganic carbon uptake into chloroplasts. The sequence is that of Potassium/proton antiporter CemA from Vitis vinifera (Grape).